Reading from the N-terminus, the 338-residue chain is UDP-N-acetylglucosamine--N-acetylmuramyl-(pentapeptide) pyrophosphoryl-undecaprenol N-acetylglucosamine transferase (338 aa).

Residues 10–12 (TGG), asparagine 122, serine 177, and glutamine 275 contribute to the UDP-N-acetyl-alpha-D-glucosamine site.

Belongs to the glycosyltransferase 28 family. MurG subfamily.

The protein resides in the cell inner membrane. The enzyme catalyses di-trans,octa-cis-undecaprenyl diphospho-N-acetyl-alpha-D-muramoyl-L-alanyl-D-glutamyl-meso-2,6-diaminopimeloyl-D-alanyl-D-alanine + UDP-N-acetyl-alpha-D-glucosamine = di-trans,octa-cis-undecaprenyl diphospho-[N-acetyl-alpha-D-glucosaminyl-(1-&gt;4)]-N-acetyl-alpha-D-muramoyl-L-alanyl-D-glutamyl-meso-2,6-diaminopimeloyl-D-alanyl-D-alanine + UDP + H(+). It participates in cell wall biogenesis; peptidoglycan biosynthesis. Functionally, cell wall formation. Catalyzes the transfer of a GlcNAc subunit on undecaprenyl-pyrophosphoryl-MurNAc-pentapeptide (lipid intermediate I) to form undecaprenyl-pyrophosphoryl-MurNAc-(pentapeptide)GlcNAc (lipid intermediate II). The polypeptide is UDP-N-acetylglucosamine--N-acetylmuramyl-(pentapeptide) pyrophosphoryl-undecaprenol N-acetylglucosamine transferase (Sulfurovum sp. (strain NBC37-1)).